The primary structure comprises 279 residues: Digeranylgeranylglyceryl phosphate synthase (279 aa).

The next 6 helical transmembrane spans lie at 27-47 (LIATGTLTPPSLLLAVIVALI), 90-110 (FVGGIAIATLTTTLCLAIAII), 127-147 (VLGNVAVAYLAGSVFLFGGAF), 199-219 (TGIFAFACACGAVAASLLPFG), 222-242 (WGLFYLAGIAVVDLVILFGAF), and 259-279 (TSILRAGMFAALAVFAIAAVI).

Belongs to the UbiA prenyltransferase family. DGGGP synthase subfamily. Mg(2+) is required as a cofactor.

The protein localises to the cell membrane. It catalyses the reaction sn-3-O-(geranylgeranyl)glycerol 1-phosphate + (2E,6E,10E)-geranylgeranyl diphosphate = 2,3-bis-O-(geranylgeranyl)-sn-glycerol 1-phosphate + diphosphate. It participates in membrane lipid metabolism; glycerophospholipid metabolism. Its function is as follows. Prenyltransferase that catalyzes the transfer of the geranylgeranyl moiety of geranylgeranyl diphosphate (GGPP) to the C2 hydroxyl of (S)-3-O-geranylgeranylglyceryl phosphate (GGGP). This reaction is the second ether-bond-formation step in the biosynthesis of archaeal membrane lipids. The polypeptide is Digeranylgeranylglyceryl phosphate synthase (Methanoculleus marisnigri (strain ATCC 35101 / DSM 1498 / JR1)).